Consider the following 181-residue polypeptide: Probable chemoreceptor glutamine deamidase CheD (181 aa).

The protein belongs to the CheD family.

The enzyme catalyses L-glutaminyl-[protein] + H2O = L-glutamyl-[protein] + NH4(+). Probably deamidates glutamine residues to glutamate on methyl-accepting chemotaxis receptors (MCPs), playing an important role in chemotaxis. This chain is Probable chemoreceptor glutamine deamidase CheD, found in Agrobacterium fabrum (strain C58 / ATCC 33970) (Agrobacterium tumefaciens (strain C58)).